We begin with the raw amino-acid sequence, 202 residues long: Cryptic protein (202 aa).

An N-terminal signal peptide occupies residues 1–35; sequence MRANSPTQGISLKMHQARPLFLVTVALQLIGLGYS. An N-linked (GlcNAc...) asparagine glycan is attached at asparagine 65. The EGF-like domain occupies 94-123; it reads PVSRCCHNGGTCVLGSFCVCPAYFTGRYCE. Cystine bridges form between cysteine 98–cysteine 105, cysteine 99–cysteine 111, and cysteine 113–cysteine 122. Residue aspartate 166 is the site of GPI-anchor amidated aspartate attachment. Positions 167 to 202 are cleaved as a propeptide — removed in mature form; that stretch reads LKSFLSSGARGSRECSIPSLLLLVLCLLLQGVAGKG.

This sequence belongs to the EGF-CFC (Cripto-1/FRL1/Cryptic) family. Post-translationally, N-glycosylated. As to expression, no expressed in adult tissues.

The protein localises to the cell membrane. It is found in the secreted. In terms of biological role, nodal coreceptor involved in the correct establishment of the left-right axis. May play a role in mesoderm and/or neural patterning during gastrulation. This is Cryptic protein (Cfc1) from Mus musculus (Mouse).